A 506-amino-acid chain; its full sequence is Arylsulfatase A (506 aa).

The first 17 residues, 1–17 (MALGTLFLALAAGLSTA), serve as a signal peptide directing secretion. Positions 28, 29, and 68 each coordinate Ca(2+). The active-site Nucleophile is the C68. C68 bears the 3-oxoalanine (Cys) mark. K122 contributes to the substrate binding site. Residue H124 is part of the active site. Substrate is bound at residue S149. Intrachain disulfides connect C155–C171 and C160–C167. N157 is a glycosylation site (N-linked (GlcNAc...) asparagine). N-linked (GlcNAc...) asparagine glycosylation is present at N183. A substrate-binding site is contributed by H228. The Ca(2+) site is built by D280 and N281. 4 cysteine pairs are disulfide-bonded: C299–C413, C487–C499, C488–C501, and C492–C498. K301 contributes to the substrate binding site. N349 carries an N-linked (GlcNAc...) asparagine glycan.

Belongs to the sulfatase family. Homodimer at neutral pH and homooctamer at acidic pH. Exists both as a single chain of 58 kDa (component A) or as a chain of 50 kDa (component B) linked by disulfide bond(s) to a 7 kDa chain (component C). Interacts with SUMF1. The cofactor is Ca(2+). In terms of processing, the conversion to 3-oxoalanine (also known as C-formylglycine, FGly), of a serine or cysteine residue in prokaryotes and of a cysteine residue in eukaryotes, is critical for catalytic activity. This post-translational modification is severely defective in multiple sulfatase deficiency (MSD).

Its subcellular location is the endoplasmic reticulum. It is found in the lysosome. The catalysed reaction is an N-acyl-1-beta-D-(3-O-sulfo)-galactosyl-sphing-4-enine + H2O = a beta-D-galactosyl-(1&lt;-&gt;1')-N-acylsphing-4-enine + sulfate + H(+). In terms of biological role, hydrolyzes cerebroside sulfate. In Mus musculus (Mouse), this protein is Arylsulfatase A (Arsa).